The sequence spans 341 residues: HTH-type transcriptional repressor PurR (341 aa).

The region spanning 2–56 is the HTH lacI-type domain; it reads ATIKDVAKRAGVSTTTVSHVINKTRFVAEETKAAVGAAIKELHYSPSAVARSLKV. A DNA-binding region (H-T-H motif) is located at residues 4–23; the sequence is IKDVAKRAGVSTTTVSHVIN. Residues 48-56 mediate DNA binding; sequence SAVARSLKV. Tyrosine 73, arginine 190, threonine 192, phenylalanine 221, and aspartate 275 together coordinate hypoxanthine.

Homodimer.

Its pathway is purine metabolism; purine nucleotide biosynthesis [regulation]. Its function is as follows. Is the main repressor of the genes involved in the de novo synthesis of purine nucleotides, regulating purB, purC, purEK, purF, purHD, purL, purMN and guaBA expression. PurR is allosterically activated to bind its cognate DNA by binding the purine corepressors, hypoxanthine or guanine, thereby effecting transcription repression. The protein is HTH-type transcriptional repressor PurR of Serratia proteamaculans (strain 568).